Here is a 580-residue protein sequence, read N- to C-terminus: Acyl-coenzyme A synthetase ACSM3, mitochondrial (580 aa).

Residues 1 to 21 (MAMLLRARCFHRLAIPDPRRI) constitute a mitochondrion transit peptide. An N6-succinyllysine mark is found at lysine 67 and lysine 100. Lysine 151 carries the post-translational modification N6-acetyllysine. ATP contacts are provided by residues 229–237 (TSGTTGPPK), 368–373 (EGYGQT), aspartate 455, arginine 470, and lysine 566.

It belongs to the ATP-dependent AMP-binding enzyme family. Mg(2+) serves as cofactor. It depends on Mn(2+) as a cofactor.

Its subcellular location is the mitochondrion. It is found in the mitochondrion matrix. The enzyme catalyses a medium-chain fatty acid + ATP + CoA = a medium-chain fatty acyl-CoA + AMP + diphosphate. It carries out the reaction propanoate + ATP + CoA = propanoyl-CoA + AMP + diphosphate. The catalysed reaction is butanoate + ATP + CoA = butanoyl-CoA + AMP + diphosphate. It catalyses the reaction 2-methylpropanoate + ATP + CoA = 2-methylpropanoyl-CoA + AMP + diphosphate. The enzyme catalyses 2-methylbutanoate + ATP + CoA = 2-methylbutanoyl-CoA + AMP + diphosphate. It carries out the reaction octanoate + ATP + CoA = octanoyl-CoA + AMP + diphosphate. In terms of biological role, catalyzes the activation of fatty acids by CoA to produce an acyl-CoA, the first step in fatty acid metabolism. Capable of activating medium-chain fatty acids with a preference for isobutyrate among fatty acids with 2-6 carbon atoms. The chain is Acyl-coenzyme A synthetase ACSM3, mitochondrial (Acsm3) from Rattus norvegicus (Rat).